The sequence spans 344 residues: Dihydroorotate dehydrogenase (quinone) (344 aa).

FMN-binding positions include 64-68 (AGLDK) and T88. K68 is a substrate binding site. 113-117 (NRMGF) is a substrate binding site. The FMN site is built by N144 and N177. N177 is a substrate binding site. S180 serves as the catalytic Nucleophile. N182 lines the substrate pocket. FMN-binding residues include K222 and T250. 251–252 (NT) contributes to the substrate binding site. Residues G273, G302, and 323-324 (YS) each bind FMN.

This sequence belongs to the dihydroorotate dehydrogenase family. Type 2 subfamily. As to quaternary structure, monomer. It depends on FMN as a cofactor.

It is found in the cell membrane. It catalyses the reaction (S)-dihydroorotate + a quinone = orotate + a quinol. Its pathway is pyrimidine metabolism; UMP biosynthesis via de novo pathway; orotate from (S)-dihydroorotate (quinone route): step 1/1. Catalyzes the conversion of dihydroorotate to orotate with quinone as electron acceptor. This is Dihydroorotate dehydrogenase (quinone) from Polynucleobacter asymbioticus (strain DSM 18221 / CIP 109841 / QLW-P1DMWA-1) (Polynucleobacter necessarius subsp. asymbioticus).